The following is a 65-amino-acid chain: DNA gyrase inhibitor YacG (65 aa).

Residues C9, C12, C28, and C32 each contribute to the Zn(2+) site. The tract at residues 44–65 (EKRIPSSSDLSESDDWSEEPKQ) is disordered. Over residues 54–65 (SESDDWSEEPKQ) the composition is skewed to acidic residues.

It belongs to the DNA gyrase inhibitor YacG family. As to quaternary structure, interacts with GyrB. Requires Zn(2+) as cofactor.

Inhibits all the catalytic activities of DNA gyrase by preventing its interaction with DNA. Acts by binding directly to the C-terminal domain of GyrB, which probably disrupts DNA binding by the gyrase. The protein is DNA gyrase inhibitor YacG of Escherichia coli O6:H1 (strain CFT073 / ATCC 700928 / UPEC).